A 297-amino-acid polypeptide reads, in one-letter code: Acetyl-coenzyme A carboxylase carboxyl transferase subunit beta (297 aa).

One can recognise a CoA carboxyltransferase N-terminal domain in the interval 27–296 (LWHKCPSCEA…PEEAREAAAV (270 aa)). Cys-31, Cys-34, Cys-50, and Cys-53 together coordinate Zn(2+). The C4-type zinc finger occupies 31 to 53 (CPSCEAVLYRPELEKTLDVCPKC).

This sequence belongs to the AccD/PCCB family. Acetyl-CoA carboxylase is a heterohexamer composed of biotin carboxyl carrier protein (AccB), biotin carboxylase (AccC) and two subunits each of ACCase subunit alpha (AccA) and ACCase subunit beta (AccD). Requires Zn(2+) as cofactor.

Its subcellular location is the cytoplasm. It catalyses the reaction N(6)-carboxybiotinyl-L-lysyl-[protein] + acetyl-CoA = N(6)-biotinyl-L-lysyl-[protein] + malonyl-CoA. It functions in the pathway lipid metabolism; malonyl-CoA biosynthesis; malonyl-CoA from acetyl-CoA: step 1/1. Functionally, component of the acetyl coenzyme A carboxylase (ACC) complex. Biotin carboxylase (BC) catalyzes the carboxylation of biotin on its carrier protein (BCCP) and then the CO(2) group is transferred by the transcarboxylase to acetyl-CoA to form malonyl-CoA. The polypeptide is Acetyl-coenzyme A carboxylase carboxyl transferase subunit beta (Pseudomonas putida (strain ATCC 700007 / DSM 6899 / JCM 31910 / BCRC 17059 / LMG 24140 / F1)).